The primary structure comprises 134 residues: Large ribosomal subunit protein bL12 (134 aa).

This sequence belongs to the bacterial ribosomal protein bL12 family. In terms of assembly, homodimer. Part of the ribosomal stalk of the 50S ribosomal subunit. Forms a multimeric L10(L12)X complex, where L10 forms an elongated spine to which 2 to 4 L12 dimers bind in a sequential fashion. Binds GTP-bound translation factors.

Forms part of the ribosomal stalk which helps the ribosome interact with GTP-bound translation factors. Is thus essential for accurate translation. The chain is Large ribosomal subunit protein bL12 from Chlamydia abortus (strain DSM 27085 / S26/3) (Chlamydophila abortus).